A 535-amino-acid polypeptide reads, in one-letter code: Calcium-dependent protein kinase 1 (535 aa).

Residues 1 to 34 are disordered; it reads MGCNQSKSANDVRGNKVNNVNSKKKNNKREDIND. Residue Gly-2 is the site of N-myristoyl glycine attachment. A lipid anchor (S-palmitoyl cysteine) is attached at Cys-3. In terms of domain architecture, Protein kinase spans 57–324; that stretch reads YFKVRKLGSG…AEEALNSRWI (268 aa). Residues 63–71 and Lys-86 each bind ATP; that span reads LGSGAYGEV. Position 65 is a phosphoserine (Ser-65). Residue Ser-117 is modified to Phosphoserine. Asp-190 acts as the Proton acceptor in catalysis. Ser-216 and Ser-219 each carry phosphoserine. Residue Thr-230 is modified to Phosphothreonine. Residue Ser-334 is modified to Phosphoserine. Positions 345-352 match the J domain autoinhibitory motif motif; the sequence is NMRKFEGS. Residues 345–363 are j domain; it reads NMRKFEGSQKLAQAAILFI. A J domain interacts with the EF-hand domains motif is present at residues 353–363; that stretch reads QKLAQAAILFI. 4 consecutive EF-hand domains span residues 371-406, 415-450, 451-486, and 497-532; these read EERK…LRNF, NVEE…KQIL, FSEE…GFYF, and VSEK…ICDN. Asp-384, Asn-386, Asp-388, Gln-390, Glu-395, Asp-428, Asp-430, Asn-432, Tyr-434, Glu-439, Asp-464, Asp-466, Ser-468, Lys-470, Glu-475, Asp-510, Asn-512, Asp-514, Met-516, and Glu-521 together coordinate Ca(2+).

This sequence belongs to the protein kinase superfamily. Ser/Thr protein kinase family. CDPK subfamily. As to quaternary structure, monomer. The cofactor is Mg(2+). Post-translationally, myristoylated. Myristoylation and palmitoylation are required for the localization to the parasitophorous vacuole membrane. Palmitoylated. Palmitoylation increases in merozoites in response to low level of extracellular K(+) in the host blood. Myristoylation and palmitoylation are required for the localization to the parasitophorous vacuole membrane. In terms of processing, phosphorylation at Thr-230 may regulate CDPK1 kinase activity. Phosphorylation increases in response to an increase in intracellular Ca(2+) levels. Autophosphorylated in vitro. Autophosphorylation does not affect membrane localization in vitro.

It localises to the membrane. The protein localises to the cell membrane. The protein resides in the parasitophorous vacuole membrane. It is found in the cytoplasm. Its subcellular location is the cell projection. It localises to the cilium. The protein localises to the flagellum. The protein resides in the host cell membrane. The catalysed reaction is L-seryl-[protein] + ATP = O-phospho-L-seryl-[protein] + ADP + H(+). The enzyme catalyses L-threonyl-[protein] + ATP = O-phospho-L-threonyl-[protein] + ADP + H(+). Activated by calcium. Upon calcium binding to the EF-hand domains, the C-terminus of the junction domain (J domain) undergoes a conformational change which results in the dissociation of the pseudo-substrate inhibitory motif from the catalytic domain. This, in turn may facilitate the autophosphorylation of the activation loop at Thr-230, which leads to the kinase activation. Functionally, calcium-dependent protein kinase which acts as a sensor and effector of intracellular Ca(2+) levels probably in part downstream of cGMP-activated PKG kinase. During the liver stage, involved in sporozoite motility and thus in sporozoite invasion of host hepatocytes, probably together with CDPK4 and CDPK5. In the mosquito midgut and during the last stage of male gamete exflagellation, may play a role in the rupture of the host erythrocyte membrane. In the mosquito midgut, required for the differentiation of the zygote into the ookinete by promoting the translational activation of a subset of repressed mRNAs; these mRNAs are kept repressed in the zygote by the DOZI- or CITH-containing mRNP complexes. Dispensable during the asexual blood stage. This chain is Calcium-dependent protein kinase 1, found in Plasmodium yoelii yoelii.